The chain runs to 382 residues: Lipid-A-disaccharide synthase (382 aa).

It belongs to the LpxB family.

The catalysed reaction is 2-N,3-O-bis[(3R)-3-hydroxytetradecanoyl]-alpha-D-glucosaminyl 1-phosphate + UDP-2-N,3-O-bis[(3R)-3-hydroxytetradecanoyl]-alpha-D-glucosamine = lipid A disaccharide (E. coli) + UDP + H(+). The enzyme catalyses a lipid X + a UDP-2-N,3-O-bis[(3R)-3-hydroxyacyl]-alpha-D-glucosamine = a lipid A disaccharide + UDP + H(+). It participates in glycolipid biosynthesis; lipid IV(A) biosynthesis; lipid IV(A) from (3R)-3-hydroxytetradecanoyl-[acyl-carrier-protein] and UDP-N-acetyl-alpha-D-glucosamine: step 5/6. Functionally, condensation of UDP-2,3-diacylglucosamine and 2,3-diacylglucosamine-1-phosphate to form lipid A disaccharide, a precursor of lipid A, a phosphorylated glycolipid that anchors the lipopolysaccharide to the outer membrane of the cell. The chain is Lipid-A-disaccharide synthase from Escherichia coli O157:H7.